The primary structure comprises 269 residues: Putative phosphoenolpyruvate synthase regulatory protein (269 aa).

Position 149 to 156 (Gly-149 to Thr-156) interacts with ADP.

This sequence belongs to the pyruvate, phosphate/water dikinase regulatory protein family. PSRP subfamily.

The catalysed reaction is [pyruvate, water dikinase] + ADP = [pyruvate, water dikinase]-phosphate + AMP + H(+). It catalyses the reaction [pyruvate, water dikinase]-phosphate + phosphate + H(+) = [pyruvate, water dikinase] + diphosphate. Functionally, bifunctional serine/threonine kinase and phosphorylase involved in the regulation of the phosphoenolpyruvate synthase (PEPS) by catalyzing its phosphorylation/dephosphorylation. The chain is Putative phosphoenolpyruvate synthase regulatory protein from Pseudoalteromonas translucida (strain TAC 125).